The primary structure comprises 406 residues: Zinc finger CCCH domain-containing protein 15 homolog (406 aa).

The segment covering 1-11 has biased composition (low complexity); the sequence is MPPKKAPAGPS. A disordered region spans residues 1-70; the sequence is MPPKKAPAGP…DKKKDEKEKK (70 aa). The span at 12–28 shows a compositional bias: basic and acidic residues; it reads KKTEQKKKEKVIEDKTF. The span at 38–50 shows a compositional bias: low complexity; sequence QQKFIQQVQKQVQ. The segment covering 56–70 has biased composition (basic and acidic residues); sequence PRQDGDKKKDEKEKK. A coiled-coil region spans residues 57 to 82; sequence RQDGDKKKDEKEKKLADLREMASIFK. C3H1-type zinc fingers lie at residues 94–121 and 166–203; these read DPKS…HDLS and PTTE…HALP. The disordered stretch occupies residues 336-382; the sequence is VDGSGTIASSTRLLDQATEAAKTAAAEDGAASDDENPSSSAPANDAA. 2 stretches are compositionally biased toward low complexity: residues 352–364 and 372–382; these read ATEA…AEDG and PSSSAPANDAA.

This sequence belongs to the ZC3H15/TMA46 family.

The chain is Zinc finger CCCH domain-containing protein 15 homolog from Drosophila pseudoobscura pseudoobscura (Fruit fly).